The primary structure comprises 138 residues: Large ribosomal subunit protein uL16 (138 aa).

Residues 1–13 are compositionally biased toward basic residues; the sequence is MLQPKRRKYRKEQ. Positions 1 to 20 are disordered; the sequence is MLQPKRRKYRKEQKGRNTGI.

It belongs to the universal ribosomal protein uL16 family. Part of the 50S ribosomal subunit.

Functionally, binds 23S rRNA and is also seen to make contacts with the A and possibly P site tRNAs. This Paraburkholderia phytofirmans (strain DSM 17436 / LMG 22146 / PsJN) (Burkholderia phytofirmans) protein is Large ribosomal subunit protein uL16.